A 95-amino-acid chain; its full sequence is Integration host factor subunit beta (95 aa).

It belongs to the bacterial histone-like protein family. In terms of assembly, heterodimer of an alpha and a beta chain.

Functionally, this protein is one of the two subunits of integration host factor, a specific DNA-binding protein that functions in genetic recombination as well as in transcriptional and translational control. The sequence is that of Integration host factor subunit beta from Klebsiella pneumoniae subsp. pneumoniae (strain ATCC 700721 / MGH 78578).